A 288-amino-acid chain; its full sequence is Homoserine kinase (288 aa).

An ATP-binding site is contributed by 79 to 89; the sequence is PPARGLGSSSA.

The protein belongs to the GHMP kinase family. Homoserine kinase subfamily.

Its subcellular location is the cytoplasm. The enzyme catalyses L-homoserine + ATP = O-phospho-L-homoserine + ADP + H(+). It functions in the pathway amino-acid biosynthesis; L-threonine biosynthesis; L-threonine from L-aspartate: step 4/5. Its function is as follows. Catalyzes the ATP-dependent phosphorylation of L-homoserine to L-homoserine phosphate. This is Homoserine kinase from Listeria monocytogenes serotype 4b (strain F2365).